Here is an 803-residue protein sequence, read N- to C-terminus: Palmitoyl thioesterase CPT1C (803 aa).

At methionine 1–threonine 52 the chain is on the cytoplasmic side. A helical membrane pass occupies residues glycine 53–leucine 75. Topologically, residues glutamine 76–glycine 103 are lumenal. Residues valine 104–leucine 126 traverse the membrane as a helical segment. Residues arginine 127–phenylalanine 803 lie on the Cytoplasmic side of the membrane. Histidine 470 functions as the Proton acceptor in the catalytic mechanism. Glycine 552–aspartate 564 lines the CoA pocket. Residues tyrosine 586, serine 588, and threonine 599 each contribute to the (R)-carnitine site. The tract at residues leucine 761 to phenylalanine 803 is required for interaction with GRIA1. The interval phenylalanine 772–phenylalanine 803 is disordered. Positions serine 788–phenylalanine 803 are enriched in polar residues.

It belongs to the carnitine/choline acetyltransferase family. In terms of assembly, peripherally associated with AMPAR complex. AMPAR complex consists of an inner core made of 4 pore-forming GluA/GRIA proteins (GRIA1, GRIA2, GRIA3 and GRIA4) and 4 major auxiliary subunits arranged in a twofold symmetry. One of the two pairs of distinct binding sites is occupied either by CNIH2, CNIH3 or CACNG2, CACNG3. The other harbors CACNG2, CACNG3, CACNG4, CACNG8 or GSG1L. This inner core of AMPAR complex is complemented by outer core constituents binding directly to the GluA/GRIA proteins at sites distinct from the interaction sites of the inner core constituents. Outer core constituents include at least PRRT1, PRRT2, CKAMP44/SHISA9, FRRS1L and NRN1. The proteins of the inner and outer core serve as a platform for other, more peripherally associated AMPAR constituents, including CPT1C. Alone or in combination, these auxiliary subunits control the gating and pharmacology of the AMPAR complex and profoundly impact their biogenesis and protein processing. Interacts with SACM1L; the interaction regulates SACM1L phosphatidylinositol-3-phosphatase activity and translocation to endoplasmic reticulum/trans Golgi network in a malonyl-CoA dependent manner. Interacts with ATL1. Expressed predominantly in brain and testis. Expressed in motor neurons.

It is found in the cell projection. It localises to the dendrite. Its subcellular location is the axon. The protein resides in the endoplasmic reticulum membrane. It carries out the reaction S-hexadecanoyl-L-cysteinyl-[protein] + H2O = L-cysteinyl-[protein] + hexadecanoate + H(+). Its function is as follows. Palmitoyl thioesterase specifically expressed in the endoplasmic reticulum of neurons. Modulates the trafficking of the glutamate receptor, AMPAR, to plasma membrane through depalmitoylation of GRIA1. Also regulates AMPR trafficking through the regulation of SACM1L phosphatidylinositol-3-phosphatase activity by interaction in a malonyl-CoA dependent manner. Binds malonyl-CoA and couples malonyl-CoA to ceramide levels, necessary for proper spine maturation and contributing to systemic energy homeostasis and appetite control. Binds to palmitoyl-CoA, but does not have carnitine palmitoyltransferase 1 catalytic activity or at very low levels. This is Palmitoyl thioesterase CPT1C from Homo sapiens (Human).